The chain runs to 210 residues: Large ribosomal subunit protein uL3 (210 aa).

Residues 133-156 (ASHGNSLSHRVPGSIGQNQTPGKV) form a disordered region. Gln151 is modified (N5-methylglutamine).

This sequence belongs to the universal ribosomal protein uL3 family. In terms of assembly, part of the 50S ribosomal subunit. Forms a cluster with proteins L14 and L19. Methylated by PrmB.

Functionally, one of the primary rRNA binding proteins, it binds directly near the 3'-end of the 23S rRNA, where it nucleates assembly of the 50S subunit. The polypeptide is Large ribosomal subunit protein uL3 (Hamiltonella defensa subsp. Acyrthosiphon pisum (strain 5AT)).